A 101-amino-acid polypeptide reads, in one-letter code: Small ribosomal subunit protein bS18c (101 aa).

The protein belongs to the bacterial ribosomal protein bS18 family. Part of the 30S ribosomal subunit.

The protein resides in the plastid. It localises to the chloroplast. The protein is Small ribosomal subunit protein bS18c of Coffea arabica (Arabian coffee).